The following is a 432-amino-acid chain: Adenosylhomocysteinase (432 aa).

Residues 1 to 24 (MSAYSPLSAQLDADTDVDVESTRT) form a disordered region. Substrate is bound by residues Asp-137 and Glu-162. Position 163 to 165 (163 to 165 (TTT)) interacts with NAD(+). The substrate site is built by Lys-192 and Asp-196. Residues Asn-197, 226 to 231 (GYGYCG), Glu-249, Asn-284, 305 to 307 (AGH), and Asn-352 contribute to the NAD(+) site.

The protein belongs to the adenosylhomocysteinase family. NAD(+) is required as a cofactor.

The protein localises to the cytoplasm. The catalysed reaction is S-adenosyl-L-homocysteine + H2O = L-homocysteine + adenosine. The protein operates within amino-acid biosynthesis; L-homocysteine biosynthesis; L-homocysteine from S-adenosyl-L-homocysteine: step 1/1. In terms of biological role, may play a key role in the regulation of the intracellular concentration of adenosylhomocysteine. This Haloquadratum walsbyi (strain DSM 16854 / JCM 12705 / C23) protein is Adenosylhomocysteinase.